A 618-amino-acid polypeptide reads, in one-letter code: Dihydroxy-acid dehydratase (618 aa).

A Mg(2+)-binding site is contributed by Asp-81. Residue Cys-122 coordinates [2Fe-2S] cluster. Asp-123 and Lys-124 together coordinate Mg(2+). Residue Lys-124 is modified to N6-carboxylysine. Cys-195 provides a ligand contact to [2Fe-2S] cluster. Glu-493 serves as a coordination point for Mg(2+). The active-site Proton acceptor is Ser-519.

It belongs to the IlvD/Edd family. Homodimer. It depends on [2Fe-2S] cluster as a cofactor. The cofactor is Mg(2+).

The enzyme catalyses (2R)-2,3-dihydroxy-3-methylbutanoate = 3-methyl-2-oxobutanoate + H2O. The catalysed reaction is (2R,3R)-2,3-dihydroxy-3-methylpentanoate = (S)-3-methyl-2-oxopentanoate + H2O. Its pathway is amino-acid biosynthesis; L-isoleucine biosynthesis; L-isoleucine from 2-oxobutanoate: step 3/4. It participates in amino-acid biosynthesis; L-valine biosynthesis; L-valine from pyruvate: step 3/4. Functionally, functions in the biosynthesis of branched-chain amino acids. Catalyzes the dehydration of (2R,3R)-2,3-dihydroxy-3-methylpentanoate (2,3-dihydroxy-3-methylvalerate) into 2-oxo-3-methylpentanoate (2-oxo-3-methylvalerate) and of (2R)-2,3-dihydroxy-3-methylbutanoate (2,3-dihydroxyisovalerate) into 2-oxo-3-methylbutanoate (2-oxoisovalerate), the penultimate precursor to L-isoleucine and L-valine, respectively. The protein is Dihydroxy-acid dehydratase of Shewanella amazonensis (strain ATCC BAA-1098 / SB2B).